The primary structure comprises 232 residues: Adenosylcobinamide-GDP ribazoletransferase (232 aa).

Transmembrane regions (helical) follow at residues 32–52, 54–74, 102–122, 126–146, 172–192, and 212–232; these read PIYFPLVGYIPGILFFFGGSF, NFLLKILFLILGYYFFDLFHF, VGPFAVFFGTLYVVVFWTLYL, PITFIYSSVFGRYSMNLLMFF, FFLLPLLFSMKYFFISYVVTV, and DVLGGACLMTNGLLLVVLGVV.

This sequence belongs to the CobS family. Mg(2+) is required as a cofactor.

Its subcellular location is the cell inner membrane. It catalyses the reaction alpha-ribazole + adenosylcob(III)inamide-GDP = adenosylcob(III)alamin + GMP + H(+). The enzyme catalyses alpha-ribazole 5'-phosphate + adenosylcob(III)inamide-GDP = adenosylcob(III)alamin 5'-phosphate + GMP + H(+). The protein operates within cofactor biosynthesis; adenosylcobalamin biosynthesis; adenosylcobalamin from cob(II)yrinate a,c-diamide: step 7/7. Joins adenosylcobinamide-GDP and alpha-ribazole to generate adenosylcobalamin (Ado-cobalamin). Also synthesizes adenosylcobalamin 5'-phosphate from adenosylcobinamide-GDP and alpha-ribazole 5'-phosphate. The protein is Adenosylcobinamide-GDP ribazoletransferase of Thermosipho melanesiensis (strain DSM 12029 / CIP 104789 / BI429).